Reading from the N-terminus, the 242-residue chain is 1-(5-phosphoribosyl)-5-[(5-phosphoribosylamino)methylideneamino] imidazole-4-carboxamide isomerase (242 aa).

Aspartate 7 (proton acceptor) is an active-site residue. The Proton donor role is filled by aspartate 129.

This sequence belongs to the HisA/HisF family.

The protein resides in the cytoplasm. The catalysed reaction is 1-(5-phospho-beta-D-ribosyl)-5-[(5-phospho-beta-D-ribosylamino)methylideneamino]imidazole-4-carboxamide = 5-[(5-phospho-1-deoxy-D-ribulos-1-ylimino)methylamino]-1-(5-phospho-beta-D-ribosyl)imidazole-4-carboxamide. It functions in the pathway amino-acid biosynthesis; L-histidine biosynthesis; L-histidine from 5-phospho-alpha-D-ribose 1-diphosphate: step 4/9. In Pseudoalteromonas translucida (strain TAC 125), this protein is 1-(5-phosphoribosyl)-5-[(5-phosphoribosylamino)methylideneamino] imidazole-4-carboxamide isomerase.